The sequence spans 213 residues: Cytochrome b6 (213 aa).

A helical transmembrane segment spans residues 30 to 50; it reads IFYCLGGLTLLCFIIQCLTGV. Cys-33 is a binding site for heme c. Residues His-84 and His-98 each coordinate heme b. A run of 3 helical transmembrane segments spans residues 88–108, 114–134, and 184–204; these read CQLM…TGAF, LNWV…FTGY, and LHVM…FIMI. The heme b site is built by His-185 and His-200.

This sequence belongs to the cytochrome b family. PetB subfamily. The subunits of the cytochrome bc complex are a Rieske Fe-S protein (PetC), cytochrome b6 (PetB), subunit IV (PetD), and a diheme cytochrome c (PetX). The cofactor is heme b. Requires heme c as cofactor.

It localises to the cell membrane. Component of the cytochrome bc complex which donates electrons to the photosynthetic reaction center. This is Cytochrome b6 from Heliobacterium modesticaldum (strain ATCC 51547 / Ice1).